The chain runs to 342 residues: N-acetyl-gamma-glutamyl-phosphate reductase (342 aa).

C149 is an active-site residue.

It belongs to the NAGSA dehydrogenase family. Type 1 subfamily.

The protein localises to the cytoplasm. The catalysed reaction is N-acetyl-L-glutamate 5-semialdehyde + phosphate + NADP(+) = N-acetyl-L-glutamyl 5-phosphate + NADPH + H(+). It participates in amino-acid biosynthesis; L-arginine biosynthesis; N(2)-acetyl-L-ornithine from L-glutamate: step 3/4. Catalyzes the NADPH-dependent reduction of N-acetyl-5-glutamyl phosphate to yield N-acetyl-L-glutamate 5-semialdehyde. The chain is N-acetyl-gamma-glutamyl-phosphate reductase from Ruegeria pomeroyi (strain ATCC 700808 / DSM 15171 / DSS-3) (Silicibacter pomeroyi).